An 876-amino-acid chain; its full sequence is uncharacterized protein (876 aa).

Positions 37–48 (DEDKSNNDDRRS) are enriched in basic and acidic residues. 4 disordered regions span residues 37-67 (DEDK…KGSN), 112-155 (DESG…RNIK), 226-254 (KKKS…TKSQ), and 330-353 (MMMD…SRSI). Residues S48 and S51 each carry the phosphoserine modification. Low complexity predominate over residues 49–58 (LASILDSSSS). Polar residues predominate over residues 115–131 (GFTSDNNADYFSGNSYS). 4 positions are modified to phosphoserine: S360, S510, S552, and S577. The segment at 490–513 (PEVTKQKNTSGPKPGFSHSKSADA) is disordered. Disordered regions lie at residues 661 to 728 (ITGG…RSPQ) and 750 to 876 (RHSL…FGRL). Residues 689–699 (SKSKSRSSSKS) are compositionally biased toward basic residues. Low complexity predominate over residues 717 to 726 (SSASASRSRS). At S775 the chain carries Phosphoserine. Low complexity-rich tracts occupy residues 794-808 (NKDS…SSSL) and 842-854 (FSFF…SPSS).

This is an uncharacterized protein from Saccharomyces cerevisiae (strain ATCC 204508 / S288c) (Baker's yeast).